The chain runs to 629 residues: Glutamyl-tRNA(Gln) amidotransferase subunit E (629 aa).

A disordered region spans residues 405 to 426; that stretch reads PEETRRALPDGNTQYMRPLPGK.

This sequence belongs to the GatB/GatE family. GatE subfamily. As to quaternary structure, heterodimer of GatD and GatE.

It catalyses the reaction L-glutamyl-tRNA(Gln) + L-glutamine + ATP + H2O = L-glutaminyl-tRNA(Gln) + L-glutamate + ADP + phosphate + H(+). In terms of biological role, allows the formation of correctly charged Gln-tRNA(Gln) through the transamidation of misacylated Glu-tRNA(Gln) in organisms which lack glutaminyl-tRNA synthetase. The reaction takes place in the presence of glutamine and ATP through an activated gamma-phospho-Glu-tRNA(Gln). The GatDE system is specific for glutamate and does not act on aspartate. The polypeptide is Glutamyl-tRNA(Gln) amidotransferase subunit E (Thermococcus sibiricus (strain DSM 12597 / MM 739)).